A 164-amino-acid polypeptide reads, in one-letter code: Lipoprotein signal peptidase (164 aa).

3 helical membrane passes run 12 to 32, 70 to 90, and 102 to 122; these read WLWLVVVVLIIDLGSKYLILQ, WFFAGIAIGISVILAVMMYRS, and ALIIGGALGNLFDRLWHGFVV. Residues Asp123 and Asp141 contribute to the active site. The chain crosses the membrane as a helical span at residues 137 to 157; sequence FNLADTAICVGAALIVLEGFL.

The protein belongs to the peptidase A8 family.

The protein resides in the cell inner membrane. The enzyme catalyses Release of signal peptides from bacterial membrane prolipoproteins. Hydrolyzes -Xaa-Yaa-Zaa-|-(S,diacylglyceryl)Cys-, in which Xaa is hydrophobic (preferably Leu), and Yaa (Ala or Ser) and Zaa (Gly or Ala) have small, neutral side chains.. It participates in protein modification; lipoprotein biosynthesis (signal peptide cleavage). This protein specifically catalyzes the removal of signal peptides from prolipoproteins. This is Lipoprotein signal peptidase from Escherichia coli O9:H4 (strain HS).